Consider the following 126-residue polypeptide: Large ribosomal subunit protein bL12 (126 aa).

Belongs to the bacterial ribosomal protein bL12 family. As to quaternary structure, homodimer. Part of the ribosomal stalk of the 50S ribosomal subunit. Forms a multimeric L10(L12)X complex, where L10 forms an elongated spine to which 2 to 4 L12 dimers bind in a sequential fashion. Binds GTP-bound translation factors.

Functionally, forms part of the ribosomal stalk which helps the ribosome interact with GTP-bound translation factors. Is thus essential for accurate translation. The polypeptide is Large ribosomal subunit protein bL12 (Bifidobacterium longum subsp. infantis (strain ATCC 15697 / DSM 20088 / JCM 1222 / NCTC 11817 / S12)).